The chain runs to 473 residues: C3a anaphylatoxin chemotactic receptor (473 aa).

Residues 1–23 (MESFTADTNSTDLHSRPLFKPQD) are Extracellular-facing. N-linked (GlcNAc...) asparagine glycosylation occurs at Asn-9. The chain crosses the membrane as a helical span at residues 24–46 (IASMVILSLTCLLGLPGNGLVLW). Residues 47–57 (VAGVKMKRTVN) lie on the Cytoplasmic side of the membrane. Residues 58–80 (TVWFLHLTLADFLCCLSLPFSVA) traverse the membrane as a helical segment. Residues 81 to 96 (HLILRGHWPYGLFLCK) are Extracellular-facing. A disulfide bridge connects residues Cys-95 and Cys-172. A helical membrane pass occupies residues 97 to 118 (LIPSVIILNMFASVFLLTAISL). The Cytoplasmic portion of the chain corresponds to 119-139 (DRCLMVHKPIWCQNHRSVRTA). A helical transmembrane segment spans residues 140–160 (FAVCGCVWVVTFVMCIPVFVY). The Extracellular portion of the chain corresponds to 161 to 329 (RDLLVVDDYS…TPQVAITISR (169 aa)). Tyr-174 and Tyr-184 each carry sulfotyrosine. Asn-201 is a glycosylation site (N-linked (GlcNAc...) asparagine). The disordered stretch occupies residues 233-252 (FHTSPEDPFSQDSASQQPHY). Sulfotyrosine is present on Tyr-308. A helical transmembrane segment spans residues 330–349 (LVVGFLVPFFIMITCYSLIV). Residues 350 to 366 (FRMRKTNLTKSRNKTLR) are Cytoplasmic-facing. The chain crosses the membrane as a helical span at residues 367-389 (VAVAVVTVFFVCWIPYHIVGILL). The Extracellular portion of the chain corresponds to 390 to 406 (VITDQESALREVVLPWD). Residues 407–427 (HMSIALASANSCFNPFLYALL) form a helical membrane-spanning segment. Residues 428-473 (GKDFRKKARQSVKGILEAAFSEELTHSTSCTQDKAPSKRNHMSTDV) lie on the Cytoplasmic side of the membrane. Ser-448 is subject to Phosphoserine. Thr-452 carries the post-translational modification Phosphothreonine.

The protein belongs to the G-protein coupled receptor 1 family. Interacts with VGF-derived peptide TLQP-21.

The protein localises to the cell membrane. Functionally, receptor for the chemotactic and inflammatory peptide anaphylatoxin C3a. This receptor stimulates chemotaxis, granule enzyme release and superoxide anion production. The chain is C3a anaphylatoxin chemotactic receptor (C3ar1) from Rattus norvegicus (Rat).